Reading from the N-terminus, the 238-residue chain is Lipid transferase CIDEC (238 aa).

Residues 1 to 35 (MDYAMKSLSLLYPRSLSRHVAVSTAVVTQQLVSEP) form a required for liquid-liquid phase separation (LLPS) region. The 78-residue stretch at 41–118 (RARPCRVSTA…VLQKGQKWKS (78 aa)) folds into the CIDE-N domain.

The protein belongs to the CIDE family. In terms of assembly, homodimer. Interacts with CIDEA. Homooligomer; undergoes liquid-liquid phase separation (LLPS) via its N-terminus, facilitating lipid droplet fusion, occurs at the lipid droplet contact sites. Interacts with PLIN1. Interacts with NFAT5; this interaction is direct and retains NFAT5 in the cytoplasm. Interacts with CEBPB. Interacts with isoform CLSTN3beta of CLSTN3; inhibiting the lipid transferase activity of CIDEC. Ubiquitinated and targeted to proteasomal degradation, resulting in a short half-life (about 15 minutes in 3T3-L1 cells). Protein stability depends on triaclyglycerol synthesis, fatty acid availability and lipid droplet formation.

It localises to the lipid droplet. The protein localises to the endoplasmic reticulum. The protein resides in the nucleus. The enzyme catalyses a triacyl-sn-glycerol(in) = a triacyl-sn-glycerol(out). Its function is as follows. Lipid transferase specifically expressed in white adipose tissue, which promotes unilocular lipid droplet formation by mediating lipid droplet fusion. Lipid droplet fusion promotes their enlargement, restricting lipolysis and favoring lipid storage. Localizes on the lipid droplet surface, at focal contact sites between lipid droplets, and mediates atypical lipid droplet fusion by undergoing liquid-liquid phase separation (LLPS) and promoting directional net neutral lipid transfer from the smaller to larger lipid droplets. The transfer direction may be driven by the internal pressure difference between the contacting lipid droplet pair. Its role in neutral lipid transfer and lipid droplet enlargement is activated by the interaction with PLIN1. May also act as a CEBPB coactivator in the white adipose tissue to control the expression of a subset of CEBPB downstream target genes, including SOCS1, SOCS3, TGFB1, TGFBR1, ID2 and XDH. When overexpressed in preadipocytes, induces apoptosis or increases cell susceptibility to apoptosis induced by serum deprivation or TGFB treatment. This Rattus norvegicus (Rat) protein is Lipid transferase CIDEC.